Reading from the N-terminus, the 396-residue chain is tRNA-specific 2-thiouridylase MnmA (396 aa).

Residues 11-18 and M37 contribute to the ATP site; that span reads GLSGGVDS. The interaction with target base in tRNA stretch occupies residues 97 to 99; that stretch reads NPD. Catalysis depends on C102, which acts as the Nucleophile. C102 and C225 are disulfide-bonded. Residue G126 participates in ATP binding. The tract at residues 175–177 is interaction with tRNA; sequence KDQ. C225 functions as the Cysteine persulfide intermediate in the catalytic mechanism. The segment at 343-344 is interaction with tRNA; it reads RY.

This sequence belongs to the MnmA/TRMU family.

The protein localises to the cytoplasm. The catalysed reaction is S-sulfanyl-L-cysteinyl-[protein] + uridine(34) in tRNA + AH2 + ATP = 2-thiouridine(34) in tRNA + L-cysteinyl-[protein] + A + AMP + diphosphate + H(+). Its function is as follows. Catalyzes the 2-thiolation of uridine at the wobble position (U34) of tRNA, leading to the formation of s(2)U34. The protein is tRNA-specific 2-thiouridylase MnmA of Methylibium petroleiphilum (strain ATCC BAA-1232 / LMG 22953 / PM1).